We begin with the raw amino-acid sequence, 1071 residues long: DNA-directed RNA polymerase subunit beta (1071 aa).

This sequence belongs to the RNA polymerase beta chain family. In plastids the minimal PEP RNA polymerase catalytic core is composed of four subunits: alpha, beta, beta', and beta''. When a (nuclear-encoded) sigma factor is associated with the core the holoenzyme is formed, which can initiate transcription.

Its subcellular location is the plastid. It is found in the chloroplast. The enzyme catalyses RNA(n) + a ribonucleoside 5'-triphosphate = RNA(n+1) + diphosphate. Its function is as follows. DNA-dependent RNA polymerase catalyzes the transcription of DNA into RNA using the four ribonucleoside triphosphates as substrates. The sequence is that of DNA-directed RNA polymerase subunit beta from Nymphaea alba (White water-lily).